Consider the following 305-residue polypeptide: Delta-9 acyl-lipid desaturase 1 (305 aa).

Positions M1–A20 are disordered. 2 helical membrane-spanning segments follow: residues I39 to F59 and T60 to V80. Fe cation contacts are provided by H83, H88, H120, H123, and H124. Positions H83–H88 match the Histidine box-1 motif. The Histidine box-2 motif lies at H120–H124. The helical transmembrane segment at V180–L200 threads the bilayer. Fe cation is bound by residues H223, H252, H255, and H256. Positions H252–H256 match the Histidine box-3 motif. Residues W268–T288 form a helical membrane-spanning segment.

Belongs to the fatty acid desaturase type 1 family. It depends on Fe cation as a cofactor. In terms of tissue distribution, strongly expressed in inflorescence meristems, leaves, and flowers, and weakly in roots and seedpods.

It localises to the endoplasmic reticulum membrane. The protein localises to the plastid. It is found in the chloroplast membrane. It participates in lipid metabolism; polyunsaturated fatty acid biosynthesis. In terms of biological role, involved in delta-9 desaturation of fatty acids. Involved in the production of very-long-chain fatty acids (VLCFAs). May desaturate chloroplastic monogalactosyl diacylglycerol (MGDG) and alter chloroplast membrane fluidity, which is required to prime a cold acclimation response. This is Delta-9 acyl-lipid desaturase 1 from Arabidopsis thaliana (Mouse-ear cress).